The following is a 465-amino-acid chain: Kynureninase (465 aa).

The residue at position 1 (Met1) is an N-acetylmethionine. Pyridoxal 5'-phosphate is bound by residues Leu137, Thr138, 165-168, Ser221, Asp250, His253, and Tyr275; that span reads FPSD. Position 276 is an N6-(pyridoxal phosphate)lysine (Lys276). The pyridoxal 5'-phosphate site is built by Trp305 and Asn333.

Belongs to the kynureninase family. In terms of assembly, homodimer. Pyridoxal 5'-phosphate is required as a cofactor. As to expression, expressed in all tissues tested (heart, brain placenta, lung, liver, skeletal muscle, kidney and pancreas). Highest levels found in placenta, liver and lung. Expressed in all brain regions.

Its subcellular location is the cytoplasm. The protein localises to the cytosol. The catalysed reaction is L-kynurenine + H2O = anthranilate + L-alanine + H(+). It catalyses the reaction 3-hydroxy-L-kynurenine + H2O = 3-hydroxyanthranilate + L-alanine + H(+). The protein operates within amino-acid degradation; L-kynurenine degradation; L-alanine and anthranilate from L-kynurenine: step 1/1. It functions in the pathway cofactor biosynthesis; NAD(+) biosynthesis; quinolinate from L-kynurenine: step 2/3. With respect to regulation, inhibited by o-methoxybenzoylalanine (OMBA). Catalyzes the cleavage of L-kynurenine (L-Kyn) and L-3-hydroxykynurenine (L-3OHKyn) into anthranilic acid (AA) and 3-hydroxyanthranilic acid (3-OHAA), respectively. Has a preference for the L-3-hydroxy form. Also has cysteine-conjugate-beta-lyase activity. The chain is Kynureninase from Homo sapiens (Human).